An 883-amino-acid chain; its full sequence is DNA topoisomerase 1 (883 aa).

One can recognise a Toprim domain in the interval 2 to 126 (PKLVIVESPT…TKRMVFHEIT (125 aa)). The Mg(2+) site is built by glutamate 8 and aspartate 95. In terms of domain architecture, Topo IA-type catalytic spans 141-583 (DQRLVHAQET…QFYRGDRGLE (443 aa)). An interaction with DNA region spans residues 175-180 (SAGRVQ). A disordered region spans residues 271-294 (SLEEKPTTRKPAPPFTTSTLQQES). Catalysis depends on tyrosine 320, which acts as the O-(5'-phospho-DNA)-tyrosine intermediate. The segment at 842 to 883 (AKAGQAKAKGGRRSTGTPKSGETKARTTKTTKKTTTRRTTSR) is disordered. Over residues 867–883 (RTTKTTKKTTTRRTTSR) the composition is skewed to basic residues.

It belongs to the type IA topoisomerase family. As to quaternary structure, monomer. Mg(2+) serves as cofactor.

It catalyses the reaction ATP-independent breakage of single-stranded DNA, followed by passage and rejoining.. Functionally, releases the supercoiling and torsional tension of DNA, which is introduced during the DNA replication and transcription, by transiently cleaving and rejoining one strand of the DNA duplex. Introduces a single-strand break via transesterification at a target site in duplex DNA. The scissile phosphodiester is attacked by the catalytic tyrosine of the enzyme, resulting in the formation of a DNA-(5'-phosphotyrosyl)-enzyme intermediate and the expulsion of a 3'-OH DNA strand. The free DNA strand then undergoes passage around the unbroken strand, thus removing DNA supercoils. Finally, in the religation step, the DNA 3'-OH attacks the covalent intermediate to expel the active-site tyrosine and restore the DNA phosphodiester backbone. In Synechococcus elongatus (strain ATCC 33912 / PCC 7942 / FACHB-805) (Anacystis nidulans R2), this protein is DNA topoisomerase 1.